A 190-amino-acid polypeptide reads, in one-letter code: Glucose-6-phosphate isomerase (190 aa).

Fe cation is bound by residues histidine 89, histidine 91, glutamate 98, and histidine 137.

Belongs to the archaeal-type GPI family. In terms of assembly, homodimer. It depends on Fe cation as a cofactor.

It localises to the cytoplasm. It catalyses the reaction alpha-D-glucose 6-phosphate = beta-D-fructose 6-phosphate. The protein operates within carbohydrate degradation; glycolysis; D-glyceraldehyde 3-phosphate and glycerone phosphate from D-glucose: step 2/4. Its activity is regulated as follows. Inhibited by mannose 6-phosphate, fructose 1-phosphate and fructose 1,6-bisphosphate. Its activity is also inhibited by Cobalt (II) ions &lt; EDTA &lt; nickel (II) ions &lt; zinc (II) ions &lt;&lt; cadmium (II) ions &lt; copper (II) ions. Sodium and potassium ions and manganese ions show little or no effect on activity. The chain is Glucose-6-phosphate isomerase (pgiA) from Thermococcus litoralis.